Consider the following 240-residue polypeptide: Biosynthetic peptidoglycan transglycosylase (240 aa).

Residues 27-47 (VVLLFFFAVFALLLIFRFVPI) form a helical membrane-spanning segment.

This sequence belongs to the glycosyltransferase 51 family.

The protein resides in the cell inner membrane. It catalyses the reaction [GlcNAc-(1-&gt;4)-Mur2Ac(oyl-L-Ala-gamma-D-Glu-L-Lys-D-Ala-D-Ala)](n)-di-trans,octa-cis-undecaprenyl diphosphate + beta-D-GlcNAc-(1-&gt;4)-Mur2Ac(oyl-L-Ala-gamma-D-Glu-L-Lys-D-Ala-D-Ala)-di-trans,octa-cis-undecaprenyl diphosphate = [GlcNAc-(1-&gt;4)-Mur2Ac(oyl-L-Ala-gamma-D-Glu-L-Lys-D-Ala-D-Ala)](n+1)-di-trans,octa-cis-undecaprenyl diphosphate + di-trans,octa-cis-undecaprenyl diphosphate + H(+). The protein operates within cell wall biogenesis; peptidoglycan biosynthesis. Functionally, peptidoglycan polymerase that catalyzes glycan chain elongation from lipid-linked precursors. The polypeptide is Biosynthetic peptidoglycan transglycosylase (Haemophilus influenzae (strain PittEE)).